The chain runs to 244 residues: uncharacterized protein (244 aa).

This is an uncharacterized protein from Sulfolobus spindle-shape virus 1 (SSV1).